A 282-amino-acid chain; its full sequence is Trans,polycis-polyprenyl diphosphate synthase ((2Z,6E)-farnesyl diphosphate specific) (282 aa).

Positions 1 to 30 (MSPKTVFSTDTHREPIPPQPHPSGARPPQL) are disordered. Asp44 is a catalytic residue. Residue Asp44 participates in Mg(2+) binding. Residues 45–48 (GNGR), Trp49, Arg57, His61, and 89–91 (STE) each bind substrate. Asn92 acts as the Proton acceptor in catalysis. Residues Trp93, Arg95, Arg212, and 218–220 (RLS) each bind substrate. Glu231 lines the Mg(2+) pocket. The tract at residues 262–282 (GGAEPNPVGPPQSAAGAQGQD) is disordered.

This sequence belongs to the UPP synthase family. As to quaternary structure, homodimer. Requires Mg(2+) as cofactor.

The catalysed reaction is (2Z,6E)-farnesyl diphosphate + 10 isopentenyl diphosphate = di-trans,deca-cis-tridecaprenyl diphosphate + 10 diphosphate. It carries out the reaction (2Z,6E)-farnesyl diphosphate + 11 isopentenyl diphosphate = di-trans,undeca-cis-tetradecaprenyl diphosphate + 11 diphosphate. The enzyme catalyses (2Z,6E)-farnesyl diphosphate + 9 isopentenyl diphosphate = di-trans,nona-cis-dodecaprenyl diphosphate + 9 diphosphate. Its function is as follows. Catalyzes the synthesis of Z,E-mixed prenyl diphosphates by a condensation of isopentenyl diphosphate to an allylic diphosphate. It shows a large substrate specificity accepting dimethylallyl diphosphate (DMAPP), GPP, E,Efarnesyl diphosphate (FPP), E,E,E-geranylgeranyl diphosphate (GGPP), neryl diphosphate (Z-GPP), and (2Z,6E)-farnesyl diphosphate (Z,E-FPP) as allylic substrates. The enzyme exhibits the highest activity when Z,E-FPP is employed as an allylic substrate. The major product is dodecaprenyl diphosphate (C60) under every allylic substrate conditions, but the enzyme is also able to synthesize even C70 prenyl diphosphate as the maximum chain-length product. The polypeptide is Trans,polycis-polyprenyl diphosphate synthase ((2Z,6E)-farnesyl diphosphate specific) (Thermobifida fusca (strain YX)).